The sequence spans 103 residues: Toxin BMLCL (103 aa).

The first 21 residues, 1–21 (MKTLLLTLVVVTIICLDLGYT), serve as a signal peptide directing secretion. 5 disulfide bridges follow: cysteine 24-cysteine 45, cysteine 27-cysteine 37, cysteine 38-cysteine 72, cysteine 76-cysteine 90, and cysteine 91-cysteine 96.

It belongs to the three-finger toxin family. Ancestral subfamily. Orphan group XVII sub-subfamily. In terms of tissue distribution, expressed by the venom gland.

It is found in the secreted. Its function is as follows. Interacts with high efficiency with both neuronal alpha-7/CHRNA7 and muscle type nicotinic acetylcholine receptors (nAChRs). Tested on human alpha-7/CHRNA7 nAChR (IC(50)=42 nM), T.californica muscle receptor (IC(50)=31 nM), L.stagnalis and A.californica acetylcholine-binding proteins (IC(50)=333 nM and 3.4 uM, respectively). The protein is Toxin BMLCL of Bungarus multicinctus (Many-banded krait).